The primary structure comprises 86 residues: Anti-adapter protein IraP (86 aa).

Residues 1-36 adopt a coiled-coil conformation; that stretch reads MKNLIAELLFKLAQKEEESKELCAQVEALEIIVTAM.

It belongs to the IraP family. In terms of assembly, interacts with RssB.

The protein localises to the cytoplasm. Its function is as follows. Inhibits RpoS proteolysis by regulating RssB activity, thereby increasing the stability of the sigma stress factor RpoS especially during phosphate starvation, but also in stationary phase and during nitrogen starvation. Its effect on RpoS stability is due to its interaction with RssB, which probably blocks the interaction of RssB with RpoS, and the consequent delivery of the RssB-RpoS complex to the ClpXP protein degradation pathway. The sequence is that of Anti-adapter protein IraP from Escherichia coli O127:H6 (strain E2348/69 / EPEC).